The following is a 745-amino-acid chain: Immunoglobulin superfamily containing leucine-rich repeat protein 2 (745 aa).

An N-terminal signal peptide occupies residues 1 to 18 (MFPLRALWLVWALLGVAG). Residues 19 to 51 (SCPEPCACVDKYAHQFADCAYKELREVPEGLPA) enclose the LRRNT domain. Over 19–589 (SCPEPCACVD…VFSTKKELPS (571 aa)) the chain is Extracellular. N52 carries an N-linked (GlcNAc...) asparagine glycan. LRR repeat units lie at residues 52-73 (NVTT…AFAD), 76-97 (QVTS…ALAV), 100-123 (QLKN…RNLS), 124-145 (ALQL…ALGA), and 148-169 (DLRS…TFDA). N121 carries an N-linked (GlcNAc...) asparagine glycan. Residues 181–232 (NPFHCGCGLVWLQAWAASTRVSLPEPDSIACASPPALQGVPVYRLPALPCAP) enclose the LRRCT domain. An Ig-like domain is found at 233–371 (PSVHLSAEPP…GANSTSIRVA (139 aa)). C260 and C355 are disulfide-bonded. The disordered stretch occupies residues 287 to 326 (VLSGEDDGVGAEEGEGEGDGDLLTQTQAQTPTPAPAWPAP). Residues 290 to 306 (GEDDGVGAEEGEGEGDG) show a composition bias toward acidic residues. Residues N337 and N364 are each glycosylated (N-linked (GlcNAc...) asparagine). The tract at residues 375 to 466 (TGPPKHAPGA…QRCGNGDPSR (92 aa)) is disordered. A compositionally biased stretch (acidic residues) spans 431–449 (TETEPEEDTSEGEEAEDQI). N-linked (GlcNAc...) asparagine glycosylation is found at N474 and N563. A helical transmembrane segment spans residues 590–610 (LLVIVAVSVFLLVLATVPLLG). Residues 611-745 (AACCHLLAKH…INGNYRQTAG (135 aa)) lie on the Cytoplasmic side of the membrane. Residues 656–722 (KSYPAGGEAG…FEAGSEYSDR (67 aa)) form a disordered region. Positions 665 to 683 (GGEEPEDVQGEGLDEDAEQ) are enriched in acidic residues. The residue at position 719 (Y719) is a Phosphotyrosine. Phosphoserine is present on S720.

In terms of assembly, homomultimer. Interacts with NTRK1/TrkA.

Its subcellular location is the cell membrane. Its function is as follows. Required for axon extension during neural development. The polypeptide is Immunoglobulin superfamily containing leucine-rich repeat protein 2 (ISLR2) (Homo sapiens (Human)).